The primary structure comprises 321 residues: MSTSNIVDALIIGGGPAGLSAALAFARQNQSAIVFDSGRYRNAATDYMHLIPGLDHKAPAEFRATARSQITDRYDKIRILEGVDIVAAKKTDADSFELSDEAGQTWNGRKLILATGVEDVMLDIPGYAELWGKSIVHCLYCKGYEQRGGSAGVLAVGPLGNVNMALHIARQETALSKRVTLYSNGNESLAGELVSAFGSATAMRTDARKIKEFVAGADGKGVAIRFEDGSEVVEDYLAHQAPVKAREGLADLLGLEKGPNGEVKVSSPFQQASVRGVFAAGDNGAMLKNVPNAVFSGHVAGQMASTQLLADLNGQKSIFPI.

Residues 14-17, 36-41, H49, and A114 contribute to the FAD site; these read GGPA and DSGRYR. C138 and C141 are joined by a disulfide. Residues D282 and 289–290 each bind FAD; that span reads NV.

This sequence belongs to the class-II pyridine nucleotide-disulfide oxidoreductase family. As to quaternary structure, homodimer. It depends on FAD as a cofactor.

It participates in secondary metabolite biosynthesis. Its function is as follows. Thioredoxin reductase; part of the gene cluster that mediates the biosynthesis of an unusual class of epipolythiodioxopiperazines (ETPs) lacking the reactive thiol group important for toxicity. Firstly, L-tyrosine is prenylated by tcpD, before undergoing condensation with L-glycine in a reaction catalyzed by the NRPS tcpP leading to the diketopiperazine (DKP) backbone. Afterwards the alpha-carbon of tyrosine is oxidized by the cytochrome P450 tcpC to form a hydroxyl group. However, in contrast other ETP biosynthesis pathways studied so far, tcpC is not able to bishydroxylate the DKP at both alpha-carbon positions, but hydroxylates the alpha-carbon of the tyrosine part and the nitrogen of the glycine part. The next steps involve an alpha,beta-elimination reaction catalyzed by tcpI, a methylation by the methyltransferase tcpN the action of the four enzyme cascade tcpG/K/J/I. Due to a dysfunctional cytochrome P450 monooxygenase tcpC, the pathway leads to the biosynthesis of probable non-toxic metabolites lacking the reactive thiol group. The sequence is that of Thioredoxin reductase tcpT from Claviceps purpurea (strain 20.1) (Ergot fungus).